The following is a 248-amino-acid chain: tRNA (guanine-N(1)-)-methyltransferase (248 aa).

S-adenosyl-L-methionine contacts are provided by residues G116 and 135–140; that span reads IGDFVL.

The protein belongs to the RNA methyltransferase TrmD family. As to quaternary structure, homodimer.

Its subcellular location is the cytoplasm. It carries out the reaction guanosine(37) in tRNA + S-adenosyl-L-methionine = N(1)-methylguanosine(37) in tRNA + S-adenosyl-L-homocysteine + H(+). Specifically methylates guanosine-37 in various tRNAs. This is tRNA (guanine-N(1)-)-methyltransferase from Anaeromyxobacter sp. (strain Fw109-5).